The primary structure comprises 547 residues: ATP synthase subunit alpha (547 aa).

173-180 (GDRATGKT) is a binding site for ATP. Residues 526–547 (PEAEALADEDVEQEQIVRQKRG) form a disordered region. Residues 528–538 (AEALADEDVEQ) show a composition bias toward acidic residues.

This sequence belongs to the ATPase alpha/beta chains family. F-type ATPases have 2 components, CF(1) - the catalytic core - and CF(0) - the membrane proton channel. CF(1) has five subunits: alpha(3), beta(3), gamma(1), delta(1), epsilon(1). CF(0) has three main subunits: a(1), b(2) and c(9-12). The alpha and beta chains form an alternating ring which encloses part of the gamma chain. CF(1) is attached to CF(0) by a central stalk formed by the gamma and epsilon chains, while a peripheral stalk is formed by the delta and b chains.

It is found in the cell membrane. The catalysed reaction is ATP + H2O + 4 H(+)(in) = ADP + phosphate + 5 H(+)(out). Its function is as follows. Produces ATP from ADP in the presence of a proton gradient across the membrane. The alpha chain is a regulatory subunit. The protein is ATP synthase subunit alpha of Nocardioides sp. (strain ATCC BAA-499 / JS614).